Here is a 65-residue protein sequence, read N- to C-terminus: Large ribosomal subunit protein bL28 (65 aa).

Positions Met-1–Ala-21 are disordered.

The protein belongs to the bacterial ribosomal protein bL28 family.

In Metamycoplasma arthritidis (strain 158L3-1) (Mycoplasma arthritidis), this protein is Large ribosomal subunit protein bL28.